A 138-amino-acid chain; its full sequence is ATP synthase epsilon chain (138 aa).

This sequence belongs to the ATPase epsilon chain family. In terms of assembly, F-type ATPases have 2 components, CF(1) - the catalytic core - and CF(0) - the membrane proton channel. CF(1) has five subunits: alpha(3), beta(3), gamma(1), delta(1), epsilon(1). CF(0) has three main subunits: a, b and c.

The protein localises to the cell inner membrane. Functionally, produces ATP from ADP in the presence of a proton gradient across the membrane. This is ATP synthase epsilon chain from Verminephrobacter eiseniae (strain EF01-2).